Here is a 245-residue protein sequence, read N- to C-terminus: Uridylate kinase (245 aa).

Residue 12 to 15 (KLSG) coordinates ATP. Positions 20–25 (GEKGVG) are involved in allosteric activation by GTP. Residue G54 participates in UMP binding. Residues G55 and R59 each contribute to the ATP site. Residues D74 and 135 to 142 (IGSPYFST) contribute to the UMP site. Residues N163, Y169, and D172 each coordinate ATP.

The protein belongs to the UMP kinase family. As to quaternary structure, homohexamer.

It localises to the cytoplasm. The enzyme catalyses UMP + ATP = UDP + ADP. The protein operates within pyrimidine metabolism; CTP biosynthesis via de novo pathway; UDP from UMP (UMPK route): step 1/1. Its activity is regulated as follows. Allosterically activated by GTP. Inhibited by UTP. In terms of biological role, catalyzes the reversible phosphorylation of UMP to UDP. The protein is Uridylate kinase of Streptococcus thermophilus (strain ATCC BAA-491 / LMD-9).